Reading from the N-terminus, the 66-residue chain is Conotoxin mr5.2 (66 aa).

Positions 1 to 19 (MRCVPVFVILLLLIASAPT) are cleaved as a signal peptide. The propeptide occupies 20-48 (VDAQLKTKDDMPLASFHANVKRTLQILRD). Residues glutamate 57 and glutamate 61 each carry the 4-carboxyglutamate modification. The residue at position 65 (asparagine 65) is an Asparagine amide.

Post-translationally, contains 2 disulfide bonds that can be either 'C1-C3, C2-C4' or 'C1-C4, C2-C3', since these disulfide connectivities have been observed for conotoxins with cysteine framework V (for examples, see AC P0DQQ7 and AC P81755). As to expression, expressed by the venom duct.

The protein localises to the secreted. In Conus marmoreus (Marble cone), this protein is Conotoxin mr5.2.